Reading from the N-terminus, the 225-residue chain is Cytidylate kinase (225 aa).

11-19 (GPAGAGKGT) is a binding site for ATP. The segment covering 169-185 (MDRIKSRIEERDARDQS) has biased composition (basic and acidic residues). A disordered region spans residues 169-195 (MDRIKSRIEERDARDQSRATAPLAAAP).

It belongs to the cytidylate kinase family. Type 1 subfamily.

It localises to the cytoplasm. It catalyses the reaction CMP + ATP = CDP + ADP. It carries out the reaction dCMP + ATP = dCDP + ADP. In Magnetococcus marinus (strain ATCC BAA-1437 / JCM 17883 / MC-1), this protein is Cytidylate kinase.